The primary structure comprises 146 residues: D-aminoacyl-tRNA deacylase (146 aa).

The Gly-cisPro motif, important for rejection of L-amino acids motif lies at 137–138 (GP).

Belongs to the DTD family. In terms of assembly, homodimer.

It is found in the cytoplasm. The enzyme catalyses glycyl-tRNA(Ala) + H2O = tRNA(Ala) + glycine + H(+). It carries out the reaction a D-aminoacyl-tRNA + H2O = a tRNA + a D-alpha-amino acid + H(+). Its function is as follows. An aminoacyl-tRNA editing enzyme that deacylates mischarged D-aminoacyl-tRNAs. Also deacylates mischarged glycyl-tRNA(Ala), protecting cells against glycine mischarging by AlaRS. Acts via tRNA-based rather than protein-based catalysis; rejects L-amino acids rather than detecting D-amino acids in the active site. By recycling D-aminoacyl-tRNA to D-amino acids and free tRNA molecules, this enzyme counteracts the toxicity associated with the formation of D-aminoacyl-tRNA entities in vivo and helps enforce protein L-homochirality. This Hahella chejuensis (strain KCTC 2396) protein is D-aminoacyl-tRNA deacylase.